A 375-amino-acid chain; its full sequence is Mitogen-activated protein kinase 1 (375 aa).

Residues 43-329 (RPPIMPIGRG…VEEALAHPYL (287 aa)) enclose the Protein kinase domain. Residues 49–57 (IGRGAYGIV) and lysine 72 contribute to the ATP site. Aspartate 169 acts as the Proton acceptor in catalysis. A Phosphothreonine modification is found at threonine 201. Residues 201-203 (TEY) carry the TXY motif. At tyrosine 203 the chain carries Phosphotyrosine. Position 206 is a phosphothreonine (threonine 206).

Belongs to the protein kinase superfamily. CMGC Ser/Thr protein kinase family. MAP kinase subfamily. Mg(2+) is required as a cofactor. Activated by wounding and UV-C in a cultivar-dependent manner; phosphorylated in cv. Pungchon but not in cv. Subicho.

It carries out the reaction L-seryl-[protein] + ATP = O-phospho-L-seryl-[protein] + ADP + H(+). It catalyses the reaction L-threonyl-[protein] + ATP = O-phospho-L-threonyl-[protein] + ADP + H(+). With respect to regulation, activated by threonine and tyrosine phosphorylation. In terms of biological role, stress-inducible protein kinase involved in oxidative stress-mediated and innate immune MAP kinase signaling cascades. The polypeptide is Mitogen-activated protein kinase 1 (Capsicum annuum (Capsicum pepper)).